A 178-amino-acid chain; its full sequence is Translation initiation factor IF-3 (178 aa).

The protein belongs to the IF-3 family. Monomer.

Its subcellular location is the cytoplasm. Functionally, IF-3 binds to the 30S ribosomal subunit and shifts the equilibrium between 70S ribosomes and their 50S and 30S subunits in favor of the free subunits, thus enhancing the availability of 30S subunits on which protein synthesis initiation begins. The polypeptide is Translation initiation factor IF-3 (Ureaplasma parvum serovar 3 (strain ATCC 700970)).